The chain runs to 306 residues: Glutaminase (306 aa).

S64, N115, E159, N166, Y190, Y242, and V260 together coordinate substrate.

Belongs to the glutaminase family. In terms of assembly, homotetramer.

The catalysed reaction is L-glutamine + H2O = L-glutamate + NH4(+). This Aeromonas hydrophila subsp. hydrophila (strain ATCC 7966 / DSM 30187 / BCRC 13018 / CCUG 14551 / JCM 1027 / KCTC 2358 / NCIMB 9240 / NCTC 8049) protein is Glutaminase.